A 311-amino-acid chain; its full sequence is Ribosomal RNA small subunit methyltransferase H (311 aa).

Residues 32-34 (GGH), aspartate 52, phenylalanine 78, aspartate 99, and glutamine 106 contribute to the S-adenosyl-L-methionine site.

This sequence belongs to the methyltransferase superfamily. RsmH family.

The protein resides in the cytoplasm. It carries out the reaction cytidine(1402) in 16S rRNA + S-adenosyl-L-methionine = N(4)-methylcytidine(1402) in 16S rRNA + S-adenosyl-L-homocysteine + H(+). Functionally, specifically methylates the N4 position of cytidine in position 1402 (C1402) of 16S rRNA. This Halothermothrix orenii (strain H 168 / OCM 544 / DSM 9562) protein is Ribosomal RNA small subunit methyltransferase H.